Reading from the N-terminus, the 127-residue chain is Protein translocase subunit SecE (127 aa).

3 helical membrane passes run 17 to 37, 41 to 61, and 95 to 115; these read VKWI…MCFY, LFIR…TMIY, and FIVI…DSVI.

The protein belongs to the SecE/SEC61-gamma family. As to quaternary structure, component of the Sec protein translocase complex. Heterotrimer consisting of SecY, SecE and SecG subunits. The heterotrimers can form oligomers, although 1 heterotrimer is thought to be able to translocate proteins. Interacts with the ribosome. Interacts with SecDF, and other proteins may be involved. Interacts with SecA.

It localises to the cell inner membrane. Functionally, essential subunit of the Sec protein translocation channel SecYEG. Clamps together the 2 halves of SecY. May contact the channel plug during translocation. This chain is Protein translocase subunit SecE, found in Buchnera aphidicola subsp. Acyrthosiphon pisum (strain APS) (Acyrthosiphon pisum symbiotic bacterium).